The sequence spans 474 residues: UDP-N-acetylmuramate--L-alanine ligase (474 aa).

123-129 (GTHGKTT) is a binding site for ATP.

It belongs to the MurCDEF family.

Its subcellular location is the cytoplasm. It carries out the reaction UDP-N-acetyl-alpha-D-muramate + L-alanine + ATP = UDP-N-acetyl-alpha-D-muramoyl-L-alanine + ADP + phosphate + H(+). Its pathway is cell wall biogenesis; peptidoglycan biosynthesis. Its function is as follows. Cell wall formation. The polypeptide is UDP-N-acetylmuramate--L-alanine ligase (Alcanivorax borkumensis (strain ATCC 700651 / DSM 11573 / NCIMB 13689 / SK2)).